A 37-amino-acid polypeptide reads, in one-letter code: MNQKEFQAVLDWMLSHTIIQFHEYNYMLQKSLPFLRR.

It belongs to the phi29likevirus gp16.5 family.

The sequence is that of Gene product 16.5 (16.5) from Bacillus phage phi15 (Bacteriophage phi-15).